Consider the following 1354-residue polypeptide: MSTGDSFETRFEKMDNLLRDPKSEVNSDCLLDGLDALVYDLDFPALRKNKNIDNFLSRYKDTINKIRDLRMKAEDYEVVKVIGRGAFGEVQLVRHKSTRKVYAMKLLSKFEMIKRSDSAFFWEERDIMAFANSPWVVQLFYAFQDDRYLYMVMEYMPGGDLVNLMSNYDVPEKWARFYTAEVVLALDAIHSMGFIHRDVKPDNMLLDKSGHLKLADFGTCMKMNKEGMVRCDTAVGTPDYISPEVLKSQGGDGYYGRECDWWSVGVFLYEMLVGDTPFYADSLVGTYSKIMNHKNSLTFPDDNDISKEAKNLICAFLTDREVRLGRNGVEEIKRHLFFKNDQWAWETLRDTVAPVVPDLSSDIDTSNFDDLEEDKGEEETFPIPKAFVGNQLPFVGFTYYSNRRYLSSANPNDNRTSSNADKSLQESLQKTIYKLEEQLHNEMQLKDEMEQKCRTSNIKLDKIMKELDEEGNQRRNLESTVSQIEKEKMLLQHRINEYQRKAEQENEKRRNVENEVSTLKDQLEDLKKVSQNSQLANEKLSQLQKQLEEANDLLRTESDTAVRLRKSHTEMSKSISQLESLNRELQERNRILENSKSQTDKDYYQLQAILEAERRDRGHDSEMIGDLQARITSLQEEVKHLKHNLEKVEGERKEAQDMLNHSEKEKNNLEIDLNYKLKSLQQRLEQEVNEHKVTKARLTDKHQSIEEAKSVAMCEMEKKLKEEREAREKAENRVVQIEKQCSMLDVDLKQSQQKLEHLTGNKERMEDEVKNLTLQLEQESNKRLLLQNELKTQAFEADNLKGLEKQMKQEINTLLEAKRLLEFELAQLTKQYRGNEGQMRELQDQLEAEQYFSTLYKTQVKELKEEIEEKNRENLKKIQELQNEKETLATQLDLAETKAESEQLARGLLEEQYFELTQESKKAASRNRQEITDKDHTVSRLEEANSMLTKDIEILRRENEELTEKMKKAEEEYKLEKEEEISNLKAAFEKNINTERTLKTQAVNKLAEIMNRKDFKIDRKKANTQDLRKKEKENRKLQLELNQEREKFNQMVVKHQKELNDMQAQLVEECAHRNELQMQLASKESDIEQLRAKLLDLSDSTSVASFPSADETDGNLPESRIEGWLSVPNRGNIKRYGWKKQYVVVSSKKILFYNDEQDKEQSNPSMVLDIDKLFHVRPVTQGDVYRAETEEIPKIFQILYANEGECRKDVEMEPVQQAEKTNFQNHKGHEFIPTLYHFPANCDACAKPLWHVFKPPPALECRRCHVKCHRDHLDKKEDLICPCKVSYDVTSARDMLLLACSQDEQKKWVTHLVKKIPKNPPSGFVRASPRTLSTRSTANQSFRKVVKNTSGKTS.

N-acetylserine is present on S2. The region spanning 76 to 338 is the Protein kinase domain; sequence YEVVKVIGRG…VEEIKRHLFF (263 aa). Residues 82–90 and K105 each bind ATP; that span reads IGRGAFGEV. D198 functions as the Proton acceptor in the catalytic mechanism. The AGC-kinase C-terminal domain maps to 341–409; sequence DQWAWETLRD…YSNRRYLSSA (69 aa). Positions 368–727 are interaction with FHOD1; that stretch reads FDDLEEDKGE…KKLKEEREAR (360 aa). The stretch at 422-692 forms a coiled coil; the sequence is KSLQESLQKT…RLEQEVNEHK (271 aa). Residues 479–556 enclose the REM-1 domain; the sequence is STVSQIEKEK…LEEANDLLRT (78 aa). Residue K647 is modified to N6-acetyllysine. Positions 707–946 are SHROOM3 binding; sequence EAKSVAMCEM…TVSRLEEANS (240 aa). The RhoBD domain occupies 949–1015; it reads TKDIEILRRE…LAEIMNRKDF (67 aa). The tract at residues 998–1010 is RHOA binding; it reads LKTQAVNKLAEIM. Positions 1011–1102 form a coiled coil; it reads NRKDFKIDRK…KLLDLSDSTS (92 aa). A phosphoserine mark is found at S1105 and S1108. The auto-inhibitory stretch occupies residues 1115–1354; that stretch reads NLPESRIEGW…VVKNTSGKTS (240 aa). Residues 1118–1317 enclose the PH domain; that stretch reads ESRIEGWLSV…WVTHLVKKIP (200 aa). Residues 1228-1281 form a Phorbol-ester/DAG-type zinc finger; sequence GHEFIPTLYHFPANCDACAKPLWHVFKPPPALECRRCHVKCHRDHLDKKEDLIC. The disordered stretch occupies residues 1320–1354; the sequence is PPSGFVRASPRTLSTRSTANQSFRKVVKNTSGKTS. S1328 carries the phosphoserine modification. Residues 1330 to 1354 are compositionally biased toward polar residues; the sequence is RTLSTRSTANQSFRKVVKNTSGKTS.

Belongs to the protein kinase superfamily. AGC Ser/Thr protein kinase family. In terms of assembly, homodimer. Interacts with RHOB, RHOC, MYLC2B and PTEN. Interacts with ITGB1BP1 (via N-terminus and PTB domain). Interacts with RHOA (activated by GTP), CHORDC1, DAPK3, GEM, JIP3, RHOE, PPP1R12A, PFN1, LIMK1, LIMK2 and TSG101. Interacts with FHOD1 in a Src-dependent manner. Interacts with SHROOM3. The cofactor is Mg(2+). In terms of processing, autophosphorylated on serine and threonine residues. Post-translationally, cleaved by caspase-3 during apoptosis. This leads to constitutive activation of the kinase and membrane blebbing. As to expression, detected in blood platelets.

The protein localises to the cytoplasm. It localises to the cytoskeleton. It is found in the microtubule organizing center. Its subcellular location is the centrosome. The protein resides in the centriole. The protein localises to the golgi apparatus membrane. It localises to the cell projection. It is found in the bleb. Its subcellular location is the cell membrane. The protein resides in the lamellipodium. The protein localises to the ruffle. It carries out the reaction L-seryl-[protein] + ATP = O-phospho-L-seryl-[protein] + ADP + H(+). It catalyses the reaction L-threonyl-[protein] + ATP = O-phospho-L-threonyl-[protein] + ADP + H(+). Its activity is regulated as follows. Activated by RHOA binding. Inhibited by Y-27632. In terms of biological role, protein kinase which is a key regulator of the actin cytoskeleton and cell polarity. Involved in regulation of smooth muscle contraction, actin cytoskeleton organization, stress fiber and focal adhesion formation, neurite retraction, cell adhesion and motility via phosphorylation of DAPK3, GFAP, LIMK1, LIMK2, MYL9/MLC2, TPPP, PFN1 and PPP1R12A. Phosphorylates FHOD1 and acts synergistically with it to promote SRC-dependent non-apoptotic plasma membrane blebbing. Phosphorylates JIP3 and regulates the recruitment of JNK to JIP3 upon UVB-induced stress. Acts as a suppressor of inflammatory cell migration by regulating PTEN phosphorylation and stability. Acts as a negative regulator of VEGF-induced angiogenic endothelial cell activation. Required for centrosome positioning and centrosome-dependent exit from mitosis. Plays a role in terminal erythroid differentiation. Inhibits podocyte motility via regulation of actin cytoskeletal dynamics and phosphorylation of CFL1. Promotes keratinocyte terminal differentiation. Involved in osteoblast compaction through the fibronectin fibrillogenesis cell-mediated matrix assembly process, essential for osteoblast mineralization. May regulate closure of the eyelids and ventral body wall by inducing the assembly of actomyosin bundles. The protein is Rho-associated protein kinase 1 (ROCK1) of Homo sapiens (Human).